The chain runs to 170 residues: Ribosome-binding factor A (170 aa).

The segment at 123 to 170 (AKAGVYAGDEDPYVKPRVIGEDEDDDDEEGDEDGDDVDRSAPGYEPAH) is disordered. Residues 143–158 (EDEDDDDEEGDEDGDD) are compositionally biased toward acidic residues.

The protein belongs to the RbfA family. As to quaternary structure, monomer. Binds 30S ribosomal subunits, but not 50S ribosomal subunits or 70S ribosomes.

Its subcellular location is the cytoplasm. One of several proteins that assist in the late maturation steps of the functional core of the 30S ribosomal subunit. Associates with free 30S ribosomal subunits (but not with 30S subunits that are part of 70S ribosomes or polysomes). Required for efficient processing of 16S rRNA. May interact with the 5'-terminal helix region of 16S rRNA. This Clavibacter sepedonicus (Clavibacter michiganensis subsp. sepedonicus) protein is Ribosome-binding factor A.